An 83-amino-acid chain; its full sequence is Large ribosomal subunit protein bL31B (83 aa).

It belongs to the bacterial ribosomal protein bL31 family. Type B subfamily. As to quaternary structure, part of the 50S ribosomal subunit.

This Lacticaseibacillus casei (strain BL23) (Lactobacillus casei) protein is Large ribosomal subunit protein bL31B.